We begin with the raw amino-acid sequence, 336 residues long: MERKGRERKLPGMKIVMPTPVETPTMNLEDRCLIKLTNESEEIEIAATDLVVLEELGKGGYGIVEKMQHRQSGIIMAVKRIKSSINDQSQKQMLNELDACRRSDCCPQMVRFYGAMFREGDVWICMEVMDTSLDKFYRHAYKIGKHIPEPFIGKMALSVIEGLNFMKEQLNLIHRDVKPSNILLNRHGQVKICDFGISGHLTNSMAKTVQAGCKPYMPPERIDGETKSAYDVRADVWSLGITIIEIAVGTHPYANWKTPFEQLKQVVKEPPPKLPMESGFSVDCQYFVKRCLEKDYNERPKYPELLAMPFMEQARNEKQFSMARFINEILDTVWRR.

The 262-residue stretch at 50–311 folds into the Protein kinase domain; that stretch reads LVVLEELGKG…YPELLAMPFM (262 aa). Residues 56 to 64 and Lys-79 contribute to the ATP site; that span reads LGKGGYGIV. Catalysis depends on Asp-176, which acts as the Proton acceptor. Ser-204 is subject to Phosphoserine. Thr-208 carries the phosphothreonine modification.

This sequence belongs to the protein kinase superfamily. STE Ser/Thr protein kinase family. MAP kinase kinase subfamily. In terms of assembly, interacts with nsy-1. Interacts with unc-16. It depends on Mg(2+) as a cofactor. As to expression, expressed in linker cell in males.

It carries out the reaction L-seryl-[protein] + ATP = O-phospho-L-seryl-[protein] + ADP + H(+). The enzyme catalyses L-threonyl-[protein] + ATP = O-phospho-L-threonyl-[protein] + ADP + H(+). The catalysed reaction is L-tyrosyl-[protein] + ATP = O-phospho-L-tyrosyl-[protein] + ADP + H(+). With respect to regulation, activated by nsy-1-mediated phosphorylation. Functionally, dual specificity protein kinase which acts as an essential component of the p38 signal transduction pathway which is also composed of upstream effector nsy-1 and downstream effector pmk-1. May phosphorylate pmk-1. Downstream of CaMKII unc-43 and adapter protein tir-1, plays a role in determining asymmetric cell fates in olfactory AWC neurons during neuronal development. Activation results in the repression of odorant receptor str-2 expression in one of the 2 AWC neurons. Involved in resistance to pathogenic Gram-positive and Gram-negative bacterial and fungal infection. Involved in resistance to the nematotoxic C.cinerea galectin Cgl2. Probably by promoting pmk-1-mediated activation of skn-1, involved in the up-regulation of gcs-1 and glutathione-S-transferase gst-4 expression upon bacterial infection. Probably downstream of tir-1, required for the expression of antimicrobial peptide nlp-29 in the epidermis in response to fungal infection or physical injury. Regulates susceptibility of B.thuringiensis pore-forming toxin Cry5B and Cry21A. Involved in the response to oxidative stress. May regulate transcription factor daf-16 localization during oxidative stress. By phosphorylating pmk-1, regulates skn-1 localization during oxidative stress. By phosphorylating and activating pmk-1, plays a role in the stabilization of transcription factor rnt-1 in the intestine during oxidative stress. Up-regulates expression of gcs-1 in intestine upon arsenite treatment. Regulates germline proliferation in response to osmotic stress, starvation and germline apoptosis induced by heavy metals, such as Cu(2+). In association with mek-1, regulates germline cell apoptosis in response to oxidative, osmotic and heat shock stresses. Plays a role downstream of tir-1/nsy-1 in regulating susceptibility to anoxia. In males, by regulating pqn-41 expression, involved in non-apoptotic death of the linker cell which guides gonad elongation during larval development. Involved in egg laying. This chain is Dual specificity mitogen-activated protein kinase kinase sek-1, found in Caenorhabditis elegans.